The sequence spans 205 residues: Lymphotoxin-alpha (205 aa).

An N-terminal signal peptide occupies residues 1–34; that stretch reads MTPPERLFLPRVRGTTLHLLLLGLLLVLLPGAQG. The O-linked (GalNAc...) threonine glycan is linked to threonine 41. Positions 63 to 205 constitute a THD domain; it reads PAAHLIGDPS…STVFFGAFAL (143 aa). Asparagine 96 carries an N-linked (GlcNAc...) asparagine glycan.

It belongs to the tumor necrosis factor family. In terms of assembly, homotrimer, and heterotrimer of either two LTB and one LTA subunits or (less prevalent) two LTA and one LTB subunits. Interacts with TNFRSF14.

The protein resides in the secreted. Its subcellular location is the membrane. Functionally, cytokine that in its homotrimeric form binds to TNFRSF1A/TNFR1, TNFRSF1B/TNFBR and TNFRSF14/HVEM. In its heterotrimeric form with LTB binds to TNFRSF3/LTBR. Lymphotoxin is produced by lymphocytes and is cytotoxic for a wide range of tumor cells in vitro and in vivo. This chain is Lymphotoxin-alpha (LTA), found in Pan troglodytes (Chimpanzee).